Here is a 151-residue protein sequence, read N- to C-terminus: DNA-directed RNA polymerase RPB6 homolog (151 aa).

Over residues 20-44 the composition is skewed to acidic residues; sequence ETEEENFVDSEEESEDKSEDKDEIV. Residues 20–46 form a disordered region; the sequence is ETEEENFVDSEEESEDKSEDKDEIVES.

The protein belongs to the archaeal RpoK/eukaryotic RPB6 RNA polymerase subunit family. As to quaternary structure, part of the viral DNA-directed RNA polymerase that consists of 8 polII-like subunits (RPB1, RPB2, RPB3, RPB5, RPB6, RPB7, RPB9, RPB10), a capping enzyme and a termination factor.

It localises to the host cytoplasm. It is found in the virion. Component of the DNA-directed RNA polymerase (RNAP) that catalyzes the transcription in the cytoplasm of viral DNA into RNA using the four ribonucleoside triphosphates as substrates. The protein is DNA-directed RNA polymerase RPB6 homolog of African swine fever virus (isolate Tick/Malawi/Lil 20-1/1983) (ASFV).